The following is an 89-amino-acid chain: Small ribosomal subunit protein uS15 (89 aa).

It belongs to the universal ribosomal protein uS15 family. In terms of assembly, part of the 30S ribosomal subunit. Forms a bridge to the 50S subunit in the 70S ribosome, contacting the 23S rRNA.

Its function is as follows. One of the primary rRNA binding proteins, it binds directly to 16S rRNA where it helps nucleate assembly of the platform of the 30S subunit by binding and bridging several RNA helices of the 16S rRNA. In terms of biological role, forms an intersubunit bridge (bridge B4) with the 23S rRNA of the 50S subunit in the ribosome. The polypeptide is Small ribosomal subunit protein uS15 (Leuconostoc mesenteroides subsp. mesenteroides (strain ATCC 8293 / DSM 20343 / BCRC 11652 / CCM 1803 / JCM 6124 / NCDO 523 / NBRC 100496 / NCIMB 8023 / NCTC 12954 / NRRL B-1118 / 37Y)).